The sequence spans 212 residues: Thiamine-phosphate synthase (212 aa).

4-amino-2-methyl-5-(diphosphooxymethyl)pyrimidine-binding positions include 40-44 and Asn-75; that span reads QFREK. 2 residues coordinate Mg(2+): Asp-76 and Asp-95. Ser-113 contributes to the 4-amino-2-methyl-5-(diphosphooxymethyl)pyrimidine binding site. Position 139–141 (139–141) interacts with 2-[(2R,5Z)-2-carboxy-4-methylthiazol-5(2H)-ylidene]ethyl phosphate; the sequence is TTS. Residue Lys-142 coordinates 4-amino-2-methyl-5-(diphosphooxymethyl)pyrimidine. Residues Gly-171 and 191-192 contribute to the 2-[(2R,5Z)-2-carboxy-4-methylthiazol-5(2H)-ylidene]ethyl phosphate site; that span reads IS.

It belongs to the thiamine-phosphate synthase family. Requires Mg(2+) as cofactor.

It catalyses the reaction 2-[(2R,5Z)-2-carboxy-4-methylthiazol-5(2H)-ylidene]ethyl phosphate + 4-amino-2-methyl-5-(diphosphooxymethyl)pyrimidine + 2 H(+) = thiamine phosphate + CO2 + diphosphate. The catalysed reaction is 2-(2-carboxy-4-methylthiazol-5-yl)ethyl phosphate + 4-amino-2-methyl-5-(diphosphooxymethyl)pyrimidine + 2 H(+) = thiamine phosphate + CO2 + diphosphate. It carries out the reaction 4-methyl-5-(2-phosphooxyethyl)-thiazole + 4-amino-2-methyl-5-(diphosphooxymethyl)pyrimidine + H(+) = thiamine phosphate + diphosphate. The protein operates within cofactor biosynthesis; thiamine diphosphate biosynthesis; thiamine phosphate from 4-amino-2-methyl-5-diphosphomethylpyrimidine and 4-methyl-5-(2-phosphoethyl)-thiazole: step 1/1. Condenses 4-methyl-5-(beta-hydroxyethyl)thiazole monophosphate (THZ-P) and 2-methyl-4-amino-5-hydroxymethyl pyrimidine pyrophosphate (HMP-PP) to form thiamine monophosphate (TMP). This is Thiamine-phosphate synthase from Staphylococcus saprophyticus subsp. saprophyticus (strain ATCC 15305 / DSM 20229 / NCIMB 8711 / NCTC 7292 / S-41).